A 219-amino-acid polypeptide reads, in one-letter code: Tritrans,polycis-undecaprenyl-diphosphate synthase (geranylgeranyl-diphosphate specific) (219 aa).

Residue D12 is part of the active site. Position 12 (D12) interacts with Mg(2+). Substrate contacts are provided by residues 13-16 (GNRR), W17, and 59-61 (SRD). The active-site Proton acceptor is N62. Substrate contacts are provided by residues R66, R168, and 174–176 (RLS). Residue E187 coordinates Mg(2+).

It belongs to the UPP synthase family. As to quaternary structure, homodimer. The cofactor is Mg(2+).

It catalyses the reaction geranylgeranyl diphosphate + 7 isopentenyl diphosphate = tri-trans,hepta-cis-undecaprenyl diphosphate + 7 diphosphate. In terms of biological role, catalyzes the sequential condensation of isopentenyl diphosphate (IPP) with geranylgeranyl diphosphate (GGPP) to yield (2Z,6Z,10Z,14Z,18Z,22Z,26Z,30E,34E,38E)-undecaprenyl diphosphate (tritrans,heptacis-UPP). It is probably the precursor of glycosyl carrier lipids. This chain is Tritrans,polycis-undecaprenyl-diphosphate synthase (geranylgeranyl-diphosphate specific), found in Aeropyrum pernix (strain ATCC 700893 / DSM 11879 / JCM 9820 / NBRC 100138 / K1).